A 693-amino-acid polypeptide reads, in one-letter code: Protein-glutamine gamma-glutamyltransferase E (693 aa).

Tyr-111 is modified (phosphotyrosine). A Phosphothreonine modification is found at Thr-112. Residues Ala-222, Asn-225, Asn-227, Asp-228, and Asn-230 each coordinate Ca(2+). Residue Cys-273 is part of the active site. 5 residues coordinate Ca(2+): Asp-302, Asp-304, Asn-306, Ser-308, and Asp-325. Active-site residues include His-331 and Asp-354. Residues Asn-394, Thr-416, Glu-444, and Glu-449 each coordinate Ca(2+). Residues 457–483 (LDKLKPNASFGATSSRNPEGEDKEPSI) form a disordered region.

Belongs to the transglutaminase superfamily. Transglutaminase family. As to quaternary structure, consists of two polypeptide chains, which are synthesized as a precursor form of a single polypeptide. Ca(2+) serves as cofactor. In terms of processing, activated by proteolytic processing. In vitro activation is commonly achieved by cleavage with dispase, a neutral bacterial protease. Physiological activation may be catalyzed by CTSL and, to a lesser extent, by CTSS. As to expression, expressed in skin and stomach and, at lower levels, in testis, kidney and spleen (at protein level). On the basis of its catalytic activity, detected in the epidermis, around the granular and spinous layers but not in the outermost cornified layers. In hair follicles, mainly located in the medulla and the hair cortex.

Its subcellular location is the cytoplasm. It carries out the reaction L-glutaminyl-[protein] + L-lysyl-[protein] = [protein]-L-lysyl-N(6)-5-L-glutamyl-[protein] + NH4(+). In terms of biological role, catalyzes the calcium-dependent formation of isopeptide cross-links between glutamine and lysine residues in various proteins, as well as the conjugation of polyamines to proteins. Involved in the formation of the cornified envelope (CE), a specialized component consisting of covalent cross-links of proteins beneath the plasma membrane of terminally differentiated keratinocytes. Catalyzes small proline-rich proteins (SPRR1 and SPRR2) and LOR cross-linking to form small interchain oligomers, which are further cross-linked by TGM1 onto the growing CE scaffold. In hair follicles, involved in cross-linking structural proteins to hardening the inner root sheath. This is Protein-glutamine gamma-glutamyltransferase E (Tgm3) from Mus musculus (Mouse).